The chain runs to 249 residues: 3-deoxy-D-manno-octulosonic acid kinase (249 aa).

D175 is a catalytic residue.

Belongs to the protein kinase superfamily. KdkA/RfaP family.

Its subcellular location is the cell inner membrane. The enzyme catalyses an alpha-Kdo-(2-&gt;6)-lipid IVA + ATP = a 4-O-phospho-alpha-Kdo-(2-&gt;6)-lipid IVA + ADP + H(+). It participates in bacterial outer membrane biogenesis; LPS core biosynthesis. In terms of biological role, catalyzes the ATP-dependent phosphorylation of the 3-deoxy-D-manno-octulosonic acid (Kdo) residue in Kdo-lipid IV(A) at the 4-OH position. In Stenotrophomonas maltophilia (strain R551-3), this protein is 3-deoxy-D-manno-octulosonic acid kinase.